The primary structure comprises 241 residues: Sec-independent protein translocase protein TatC (241 aa).

The next 6 helical transmembrane spans lie at 27-47 (LIIV…FSAG), 76-96 (LTMC…YEAF), 122-142 (FVAG…SIVI), 161-181 (IVTN…IIVL), 193-213 (LVKG…FFSP), and 217-237 (LFSQ…SMVL).

This sequence belongs to the TatC family. Forms a complex with TatA.

It localises to the cell membrane. In terms of biological role, part of the twin-arginine translocation (Tat) system that transports large folded proteins containing a characteristic twin-arginine motif in their signal peptide across membranes. This is Sec-independent protein translocase protein TatC from Methanocella arvoryzae (strain DSM 22066 / NBRC 105507 / MRE50).